We begin with the raw amino-acid sequence, 313 residues long: Protein EMSY-LIKE 2 (313 aa).

The ENT domain occupies Met-1 to Pro-88. Positions Met-35 to Asn-58 form a coiled coil. Disordered stretches follow at residues Val-84–Ile-106 and Leu-195–Leu-229. The segment covering Gly-206 to Gly-219 has biased composition (basic residues). A coiled-coil region spans residues His-267–Ala-293. Position 294 is a phosphoserine (Ser-294). A disordered region spans residues Ser-294–Gly-313.

Interacts with EDM2 in nucleus.

The protein resides in the nucleus. Probably involved in the regulation of chromatin states. Contributes to RPP7-mediated and basal immunity, especially against Hyaloperonospora arabidopsidis isolate Hiks1. Regulates negatively EDM2-dependent floral transition. The protein is Protein EMSY-LIKE 2 of Arabidopsis thaliana (Mouse-ear cress).